A 149-amino-acid polypeptide reads, in one-letter code: UPF0178 protein HEAR0259 (149 aa).

It belongs to the UPF0178 family.

This chain is UPF0178 protein HEAR0259, found in Herminiimonas arsenicoxydans.